Here is a 230-residue protein sequence, read N- to C-terminus: Large ribosomal subunit protein uL1 (230 aa).

It belongs to the universal ribosomal protein uL1 family. In terms of assembly, part of the 50S ribosomal subunit.

Functionally, binds directly to 23S rRNA. The L1 stalk is quite mobile in the ribosome, and is involved in E site tRNA release. Its function is as follows. Protein L1 is also a translational repressor protein, it controls the translation of the L11 operon by binding to its mRNA. This is Large ribosomal subunit protein uL1 from Afipia carboxidovorans (strain ATCC 49405 / DSM 1227 / KCTC 32145 / OM5) (Oligotropha carboxidovorans).